The sequence spans 284 residues: Bifunctional protein FolD (284 aa).

NADP(+) contacts are provided by residues 164–166 and serine 189; that span reads GRS.

This sequence belongs to the tetrahydrofolate dehydrogenase/cyclohydrolase family. Homodimer.

The catalysed reaction is (6R)-5,10-methylene-5,6,7,8-tetrahydrofolate + NADP(+) = (6R)-5,10-methenyltetrahydrofolate + NADPH. It carries out the reaction (6R)-5,10-methenyltetrahydrofolate + H2O = (6R)-10-formyltetrahydrofolate + H(+). It functions in the pathway one-carbon metabolism; tetrahydrofolate interconversion. Functionally, catalyzes the oxidation of 5,10-methylenetetrahydrofolate to 5,10-methenyltetrahydrofolate and then the hydrolysis of 5,10-methenyltetrahydrofolate to 10-formyltetrahydrofolate. The sequence is that of Bifunctional protein FolD from Listeria monocytogenes serotype 4b (strain F2365).